Consider the following 450-residue polypeptide: Deoxyguanosinetriphosphate triphosphohydrolase-like protein (450 aa).

Residues 61–274 (RLTHSLEVAQ…MELADDIAYA (214 aa)) enclose the HD domain.

It belongs to the dGTPase family. Type 2 subfamily.

This is Deoxyguanosinetriphosphate triphosphohydrolase-like protein from Histophilus somni (strain 2336) (Haemophilus somnus).